The sequence spans 846 residues: Translation initiation factor IF-2 (846 aa).

The tract at residues 198–219 (YKREEEEKKSKAKKAGGKGFKK) is disordered. The span at 207-219 (SKAKKAGGKGFKK) shows a compositional bias: basic residues. The 168-residue stretch at 345 to 512 (SRAPVVTIMG…AVLLQSEVLE (168 aa)) folds into the tr-type G domain. The segment at 354-361 (GHVDHGKT) is G1. 354–361 (GHVDHGKT) lines the GTP pocket. The interval 379-383 (GITQH) is G2. Positions 400-403 (DTPG) are G3. GTP-binding positions include 400 to 404 (DTPGH) and 454 to 457 (NKID). Residues 454–457 (NKID) form a G4 region. The segment at 490–492 (SAK) is G5.

The protein belongs to the TRAFAC class translation factor GTPase superfamily. Classic translation factor GTPase family. IF-2 subfamily.

The protein localises to the cytoplasm. Its function is as follows. One of the essential components for the initiation of protein synthesis. Protects formylmethionyl-tRNA from spontaneous hydrolysis and promotes its binding to the 30S ribosomal subunits. Also involved in the hydrolysis of GTP during the formation of the 70S ribosomal complex. In Francisella tularensis subsp. tularensis (strain SCHU S4 / Schu 4), this protein is Translation initiation factor IF-2.